The primary structure comprises 407 residues: CCCH-type zinc finger protein oma-1 (407 aa).

The interval M1–Q39 is disordered. Basic and acidic residues predominate over residues N7–E17. The required for taf-4 binding stretch occupies residues I46 to A80. 2 consecutive C3H1-type zinc fingers follow at residues S112 to E140 and K154 to H182. T239 is subject to Phosphothreonine; by mbk-2 and GSK3. S302 bears the Phosphoserine; by mbk-2 mark. Residue T339 is modified to Phosphothreonine; by GSK3.

Interacts with taf-4 (via C-terminus). Interacts with ifet-1. Component of a ribonucleoprotein particle complex that interacts with cgh-1 and car-1 in an RNA-dependent manner. Association with many proteins is dependent on the presence of RNA. Phosphorylation by mbk-2 and by gsk-3 are required for its rapid degradation following meiosis II. In terms of tissue distribution, exclusively expressed in the hermaphrodite gonad. Expressed prior to oocyte division. Widely distributed throughout gonadal oocytes from the mitotic stage to the developing diakinesis stage. Expressed in sperm.

Its subcellular location is the cytoplasm. The protein localises to the cytoplasmic granule. The protein resides in the nucleus. Its function is as follows. Zinc-finger RNA-binding protein that binds to 5'-UA[AU]-3' motifs in the 3'-UTR of maternal mRNAs to suppress translation in oocytes and embryos. Acts as a ribonucleoprotein particle component that may exert part of its function within cytoplasmic foci of unfertilized oocytes. Acts redundantly with oma-2 to control the temporal expression and distribution of maternal proteins and thereby promote meiotic progression, oocyte maturation, fertilization and embryonic development. Recruits the translational repressor ifet-1 to the 3'-UTR of mei-1 and zif-1 to negatively regulate their translation. By suppressing the translation of the E3 ligase zif-1, may in turn play a role in the stabilization of zif-1 targets such as the maternal transcriptional repressor protein pie-1. Following fertilization, sequesters the transcription initiation factor, taf-4, in the cytoplasm, which prevents its nuclear localization and thus allows for transcriptional suppression in early embryos, but not in oocytes. Also, together with oma-2, is involved in P-granule distribution during embryonic development. This chain is CCCH-type zinc finger protein oma-1, found in Caenorhabditis elegans.